The sequence spans 208 residues: Cytochrome c biogenesis ATP-binding export protein CcmA (208 aa).

The 205-residue stretch at 2-206 (LEAKELTCAR…IRLTAEGRDE (205 aa)) folds into the ABC transporter domain. Position 34 to 41 (34 to 41 (GPNGAGKT)) interacts with ATP.

This sequence belongs to the ABC transporter superfamily. CcmA exporter (TC 3.A.1.107) family. In terms of assembly, the complex is composed of two ATP-binding proteins (CcmA) and two transmembrane proteins (CcmB).

The protein resides in the cell inner membrane. It catalyses the reaction heme b(in) + ATP + H2O = heme b(out) + ADP + phosphate + H(+). Functionally, part of the ABC transporter complex CcmAB involved in the biogenesis of c-type cytochromes; once thought to export heme, this seems not to be the case, but its exact role is uncertain. Responsible for energy coupling to the transport system. The chain is Cytochrome c biogenesis ATP-binding export protein CcmA from Tatumella citrea (Pantoea citrea).